The primary structure comprises 124 residues: Nascent polypeptide-associated complex protein (124 aa).

The region spanning 7–74 (GLNPRKMKQM…PESRERGDSG (68 aa)) is the NAC-A/B domain. A disordered region spans residues 53 to 124 (AQGQQTYQVV…DLAAAVQKLE (72 aa)). A compositionally biased stretch (acidic residues) spans 74–93 (GSEDDSETESGGEFSEDDVE).

Belongs to the NAC-alpha family. Homodimer. Interacts with the ribosome. Binds ribosomal RNA.

Its function is as follows. Contacts the emerging nascent chain on the ribosome. The protein is Nascent polypeptide-associated complex protein of Natronomonas pharaonis (strain ATCC 35678 / DSM 2160 / CIP 103997 / JCM 8858 / NBRC 14720 / NCIMB 2260 / Gabara) (Halobacterium pharaonis).